A 1074-amino-acid polypeptide reads, in one-letter code: Transmembrane protein 132E (1074 aa).

The signal sequence occupies residues 1–25 (MAPGMSGRGGAALLCLSALLAHASG). Residues 26–893 (RSHPASPSPP…LTDLEIGMYA (868 aa)) are Extracellular-facing. 2 N-linked (GlcNAc...) asparagine glycosylation sites follow: Asn70 and Asn91. Disordered stretches follow at residues 202 to 226 (PPAP…ATGE) and 241 to 264 (ASGG…ESPT). Gly residues predominate over residues 243–256 (GGCGGSRRGAGPGV). Residues Asn318 and Asn399 are each glycosylated (N-linked (GlcNAc...) asparagine). 2 disordered regions span residues 563-585 (RSVR…ASRG) and 814-867 (GRDE…VPPT). Positions 841–862 (GAGPPGSALPAPEAPGPGTASP) are enriched in low complexity. A helical transmembrane segment spans residues 894 to 914 (LLGVFCLAILVFLINCIVFVL). Residues 915 to 1074 (RYRHKRIPPE…NYMRRIKEIA (160 aa)) lie on the Cytoplasmic side of the membrane. A disordered region spans residues 946-1063 (VQGELSPPAG…PTRPTAPPDL (118 aa)). Positions 972–984 (SGSSQTSVQSQVH) are enriched in low complexity. Residues 1034-1044 (GEEDEEEEEDL) show a composition bias toward acidic residues.

This sequence belongs to the TMEM132 family.

It localises to the membrane. Its function is as follows. Required for normal inner ear hair cell function and hearing. This chain is Transmembrane protein 132E, found in Homo sapiens (Human).